The following is a 342-amino-acid chain: S-adenosylmethionine:tRNA ribosyltransferase-isomerase (342 aa).

Belongs to the QueA family. Monomer.

Its subcellular location is the cytoplasm. The catalysed reaction is 7-aminomethyl-7-carbaguanosine(34) in tRNA + S-adenosyl-L-methionine = epoxyqueuosine(34) in tRNA + adenine + L-methionine + 2 H(+). It functions in the pathway tRNA modification; tRNA-queuosine biosynthesis. In terms of biological role, transfers and isomerizes the ribose moiety from AdoMet to the 7-aminomethyl group of 7-deazaguanine (preQ1-tRNA) to give epoxyqueuosine (oQ-tRNA). The polypeptide is S-adenosylmethionine:tRNA ribosyltransferase-isomerase (Geobacillus sp. (strain WCH70)).